Here is a 150-residue protein sequence, read N- to C-terminus: MTAKSRILVLNGPNLNLLGLREPTHYGSQTLEQIVATLRDQAQKADIELEHLQSNREYELIEAIHQAFGKVDFIIINPAAFTHTSVALRDALLGVAIPFIEVHLSNVHAREPFRHHSYLSDKAQGVICGLGAQGYEFALSAAIRALQAKQ.

Tyrosine 26 (proton acceptor) is an active-site residue. Asparagine 77, histidine 83, and aspartate 90 together coordinate substrate. The Proton donor role is filled by histidine 103. Residues leucine 104–serine 105 and arginine 114 contribute to the substrate site.

Belongs to the type-II 3-dehydroquinase family. Homododecamer.

It carries out the reaction 3-dehydroquinate = 3-dehydroshikimate + H2O. It functions in the pathway metabolic intermediate biosynthesis; chorismate biosynthesis; chorismate from D-erythrose 4-phosphate and phosphoenolpyruvate: step 3/7. Functionally, catalyzes a trans-dehydration via an enolate intermediate. This Vibrio cholerae serotype O1 (strain ATCC 39541 / Classical Ogawa 395 / O395) protein is 3-dehydroquinate dehydratase.